We begin with the raw amino-acid sequence, 1025 residues long: Probable beta-galactosidase B (1025 aa).

The signal sequence occupies residues 1 to 21 (MATAFWLLLFLLGSLHVLTAA). Asn23 carries an N-linked (GlcNAc...) asparagine glycan. Tyr90 lines the substrate pocket. Asn100 carries an N-linked (GlcNAc...) asparagine glycan. Substrate-binding residues include Asn135, Ala136, Glu137, and Asn195. The active-site Proton donor is the Glu196. N-linked (GlcNAc...) asparagine glycosylation is present at Asn211. Residue Tyr265 coordinates substrate. An intrachain disulfide couples Cys271 to Cys324. Glu308 acts as the Nucleophile in catalysis. Residue Tyr373 coordinates substrate. 7 N-linked (GlcNAc...) asparagine glycosylation sites follow: Asn411, Asn456, Asn736, Asn776, Asn884, Asn925, and Asn926.

Belongs to the glycosyl hydrolase 35 family.

It localises to the secreted. It catalyses the reaction Hydrolysis of terminal non-reducing beta-D-galactose residues in beta-D-galactosides.. Cleaves beta-linked terminal galactosyl residues from gangliosides, glycoproteins, and glycosaminoglycans. The polypeptide is Probable beta-galactosidase B (lacB) (Emericella nidulans (strain FGSC A4 / ATCC 38163 / CBS 112.46 / NRRL 194 / M139) (Aspergillus nidulans)).